A 231-amino-acid polypeptide reads, in one-letter code: Dephospho-CoA kinase (231 aa).

In terms of domain architecture, DPCK spans Arg-29–Arg-231. Position 37 to 42 (Ala-37 to Thr-42) interacts with ATP.

This sequence belongs to the CoaE family.

The protein resides in the cytoplasm. It catalyses the reaction 3'-dephospho-CoA + ATP = ADP + CoA + H(+). The protein operates within cofactor biosynthesis; coenzyme A biosynthesis; CoA from (R)-pantothenate: step 5/5. Its function is as follows. Catalyzes the phosphorylation of the 3'-hydroxyl group of dephosphocoenzyme A to form coenzyme A. The protein is Dephospho-CoA kinase of Cutibacterium acnes (strain DSM 16379 / KPA171202) (Propionibacterium acnes).